The following is a 396-amino-acid chain: MALKLNPVTTFPSTRSLNNFSSRSPRTFLMAASTFSSTSTKEAEAKEVTWTTKRGAYASDPFHAPTGSWEIFKSLGRLGLRDVLISHLKPVEKCWQPQDFLPEPESDGFEEQVKELRARAKELPDDYFVVLVGDMITEEALPTYQTMLNTLDGVRDETGASLTPWAIWTRAWTAEENRHGDLLNKYLYLSGRVDMRQIEKTIQYLIGSGMDPKTENNPYLGFIYTSFQERATFISHGNTARLAKDHGDMKLAQICGIIAADEKRHETAYTKIVEKLFEIDPDGTVLALADMMRKKISMPAHLMYDGEDDNLFDNYSSVAQRIGDTAKDYADILEFLVGRWKVDAFTGLSGEGNKAQDFVCGLPARIRKLEERAAGRAKQTSKSVPFSWIFSRELVL.

A chloroplast-targeting transit peptide spans 1 to 32; that stretch reads MALKLNPVTTFPSTRSLNNFSSRSPRTFLMAA. Residues Glu-138, Glu-176, His-179, Glu-229, Glu-262, and His-265 each coordinate Fe cation.

Belongs to the fatty acid desaturase type 2 family. As to quaternary structure, homodimer. Fe(2+) is required as a cofactor.

Its subcellular location is the plastid. It is found in the chloroplast. The catalysed reaction is octadecanoyl-[ACP] + 2 reduced [2Fe-2S]-[ferredoxin] + O2 + 2 H(+) = (9Z)-octadecenoyl-[ACP] + 2 oxidized [2Fe-2S]-[ferredoxin] + 2 H2O. It functions in the pathway lipid metabolism; fatty acid metabolism. In terms of biological role, converts stearoyl-ACP to oleoyl-ACP by introduction of a cis double bond between carbons 9 and 10 of the acyl chain. The polypeptide is Stearoyl-[acyl-carrier-protein] 9-desaturase, chloroplastic (Linum usitatissimum (Flax)).